A 326-amino-acid chain; its full sequence is Pyruvate dehydrogenase E1 component subunit beta (326 aa).

Thiamine diphosphate is bound at residue glutamate 62.

Heterodimer of an alpha and a beta chain. Thiamine diphosphate is required as a cofactor.

The enzyme catalyses N(6)-[(R)-lipoyl]-L-lysyl-[protein] + pyruvate + H(+) = N(6)-[(R)-S(8)-acetyldihydrolipoyl]-L-lysyl-[protein] + CO2. In terms of biological role, the pyruvate dehydrogenase complex catalyzes the overall conversion of pyruvate to acetyl-CoA and CO(2). It contains multiple copies of three enzymatic components: pyruvate dehydrogenase (E1), dihydrolipoamide acetyltransferase (E2) and lipoamide dehydrogenase (E3). This chain is Pyruvate dehydrogenase E1 component subunit beta (pdhB), found in Mycoplasma genitalium (strain ATCC 33530 / DSM 19775 / NCTC 10195 / G37) (Mycoplasmoides genitalium).